A 393-amino-acid chain; its full sequence is Protein TsgA (393 aa).

Helical transmembrane passes span 11–31 (WISF…GMVM), 51–71 (FLNA…EIVP), 78–98 (FGFI…SLAL), 101–121 (AAMF…TFLI), 134–154 (LLFT…VAAF), 162–182 (WYWV…LTFG), 206–226 (IGVL…LGFI), 245–265 (ALVS…SFIL), 273–293 (ILTV…TGTQ), 298–318 (WFIL…ITLG), 332–352 (FILT…GPIV), and 361–381 (LLTA…LGFV).

This sequence belongs to the major facilitator superfamily. TsgA family.

Its subcellular location is the cell inner membrane. In Salmonella heidelberg (strain SL476), this protein is Protein TsgA.